The primary structure comprises 204 residues: ATP phosphoribosyltransferase (204 aa).

Belongs to the ATP phosphoribosyltransferase family. Short subfamily. As to quaternary structure, heteromultimer composed of HisG and HisZ subunits.

It localises to the cytoplasm. It catalyses the reaction 1-(5-phospho-beta-D-ribosyl)-ATP + diphosphate = 5-phospho-alpha-D-ribose 1-diphosphate + ATP. The protein operates within amino-acid biosynthesis; L-histidine biosynthesis; L-histidine from 5-phospho-alpha-D-ribose 1-diphosphate: step 1/9. In terms of biological role, catalyzes the condensation of ATP and 5-phosphoribose 1-diphosphate to form N'-(5'-phosphoribosyl)-ATP (PR-ATP). Has a crucial role in the pathway because the rate of histidine biosynthesis seems to be controlled primarily by regulation of HisG enzymatic activity. The chain is ATP phosphoribosyltransferase from Campylobacter concisus (strain 13826).